Reading from the N-terminus, the 60-residue chain is Large ribosomal subunit protein bL32 (60 aa).

Residues 1–21 (MAVPARHTSKAKKNKRRTHYK) are disordered. Positions 7–20 (HTSKAKKNKRRTHY) are enriched in basic residues.

This sequence belongs to the bacterial ribosomal protein bL32 family.

In Streptococcus uberis (strain ATCC BAA-854 / 0140J), this protein is Large ribosomal subunit protein bL32.